The sequence spans 509 residues: Group 3 secretory phospholipase A2 (509 aa).

The N-terminal stretch at 1–19 (MGVQAGLFGMLGFLGVALG) is a signal peptide. The tract at residues 123 to 149 (ESPAGARKKRAAGQSGVPGGGHQREKR) is disordered. Residues 150 to 291 (GWTMPGTLWC…SWSSRATSPT (142 aa)) are phospholipase A2-like. The Ca(2+) site is built by Trp158, Gly160, and Gly162. 4 disulfides stabilise this stretch: Cys159-Cys181, Cys180-Cys220, Cys187-Cys213, and Cys211-Cys244. Asn167 carries N-linked (GlcNAc...) asparagine glycosylation. His184 is an active-site residue. Ca(2+) is bound at residue Asp185. Asp214 is a catalytic residue. Asn280 carries N-linked (GlcNAc...) asparagine glycosylation. Residues 283 to 354 (WSSRATSPTP…LQGPQGGLKP (72 aa)) form a disordered region. Over residues 284 to 296 (SSRATSPTPSSRS) the composition is skewed to low complexity. Residues 302 to 322 (PRQKQHLRKGPPHQKGSKRPS) show a composition bias toward basic residues. Asn325, Asn396, and Asn439 each carry an N-linked (GlcNAc...) asparagine glycan. The tract at residues 458-482 (QQRRHQLQDKGTDERQPWPSEPLRG) is disordered. Positions 463 to 473 (QLQDKGTDERQ) are enriched in basic and acidic residues.

Belongs to the phospholipase A2 family. Ca(2+) serves as cofactor. N-glycosylation does not affect the catalytic activity, but is required for proper secretion. A nonglycosylated form is observed in several cell types. Post-translationally, in several cell types, the N- and C-termini are cleaved off. As to expression, expressed in kidney, heart, liver, and skeletal muscle. Also present in placenta and peripheral blood leukocytes. Not detected in colon, thymus, spleen and small intestine. In lung, expressed in bronchial epithelial cells and alveolar macrophages, but scarcely detected in alveolar epithelium, arterial walls and interstitial fibroblasts (at protein level). In joints of osteoarthritis and rheumatoid arthritis, expressed in endothelial cells (at protein level). In normal heart, detected in some vessels. In myocardial tissues with acute infarction, expressed in vascular endothelial cells adjacent to cardiomyocytes and those in lesions with granulation. Expression in cardiomyocytes is scarce (at protein level). In uterus, breast and colon cancers, detected in tumor cells and neighboring microvascular endothelium, but not in normal glandular tissues (at protein level). Expressed in dermal resting mast cells (at protein level) and pulmonary mast cells. Expressed in neuronal fibers (at protein level). Highly expressed in dorsal root ganglia neurons (at protein level). Expressed in Purkinje cells in cerebellum (at protein level). In stomach is preferentially expressed in neuronal fibers and in microvascular endothelium. Sparsely expressed in normal aorta (at protein level). Highly expressed in macrophages and smooth muscle cells in aorta with atheroma.

It localises to the secreted. Its subcellular location is the cell membrane. The protein resides in the cytoplasm. It is found in the cytoskeleton. The protein localises to the microtubule organizing center. It localises to the centrosome. Its subcellular location is the centriole. The protein resides in the recycling endosome. The enzyme catalyses a 1,2-diacyl-sn-glycero-3-phosphocholine + H2O = a 1-acyl-sn-glycero-3-phosphocholine + a fatty acid + H(+). It carries out the reaction 1-hexadecanoyl-2-(9Z,12Z-octadecadienoyl)-sn-glycero-3-phosphocholine + H2O = (9Z,12Z)-octadecadienoate + 1-hexadecanoyl-sn-glycero-3-phosphocholine + H(+). It catalyses the reaction 1-hexadecanoyl-2-(5Z,8Z,11Z,14Z-eicosatetraenoyl)-sn-glycero-3-phosphocholine + H2O = 1-hexadecanoyl-sn-glycero-3-phosphocholine + (5Z,8Z,11Z,14Z)-eicosatetraenoate + H(+). The catalysed reaction is 1-hexadecanoyl-2-(9Z,12Z-octadecadienoyl)-sn-glycero-3-phosphoethanolamine + H2O = 1-hexadecanoyl-sn-glycero-3-phosphoethanolamine + (9Z,12Z)-octadecadienoate + H(+). The enzyme catalyses 1-hexadecanoyl-2-(5Z,8Z,11Z,14Z-eicosatetraenoyl)-sn-glycero-3-phosphoethanolamine + H2O = 1-hexadecanoyl-sn-glycero-3-phosphoethanolamine + (5Z,8Z,11Z,14Z)-eicosatetraenoate + H(+). With respect to regulation, arachidonic acid release is markedly increased by glypican, a glycosylphosphatidylinositol-anchored heparan sulfate proteoglycan. Its function is as follows. Secretory calcium-dependent phospholipase A2 that primarily targets extracellular phospholipids. Hydrolyzes the ester bond of the fatty acyl group attached at sn-2 position of phospholipids without apparent head group selectivity. Contributes to phospholipid remodeling of low-density lipoprotein (LDL) and high-density lipoprotein (HDL) particles. Hydrolyzes LDL phospholipids releasing unsaturated fatty acids that regulate macrophage differentiation toward foam cells. May act in an autocrine and paracrine manner. Secreted by immature mast cells, acts on nearby fibroblasts upstream to PTDGS to synthesize prostaglandin D2 (PGD2), which in turn promotes mast cell maturation and degranulation via PTGDR. Secreted by epididymal epithelium, acts on immature sperm cells within the duct, modulating the degree of unsaturation of the fatty acyl components of phosphatidylcholines required for acrosome assembly and sperm cell motility. Facilitates the replacement of fatty acyl chains in phosphatidylcholines in sperm membranes from omega-6 and omega-9 to omega-3 polyunsaturated fatty acids (PUFAs). Coupled to lipoxygenase pathway, may process omega-6 PUFAs to generate oxygenated lipid mediators in the male reproductive tract. At pericentrosomal preciliary compartment, negatively regulates ciliogenesis likely by regulating endocytotic recycling of ciliary membrane protein. Coupled to cyclooxygenase pathway provides arachidonate to generate prostaglandin E2 (PGE2), a potent immunomodulatory lipid in inflammation and tumorigenesis. At colonic epithelial barrier, preferentially hydrolyzes phospholipids having arachidonate and docosahexaenoate at sn-2 position, contributing to the generation of oxygenated metabolites involved in colonic stem cell homeostasis. Releases C16:0 and C18:0 lysophosphatidylcholine subclasses from neuron plasma membranes and promotes neurite outgrowth and neuron survival. This Homo sapiens (Human) protein is Group 3 secretory phospholipase A2.